A 715-amino-acid chain; its full sequence is Protein MTSS 2 (715 aa).

The IMD domain occupies 1–249 (METAEKECGA…EQVIKDLKGS (249 aa)). Residues 134–156 (HEIKKKSSDTLKLQKKARKGKGD) adopt a coiled-coil conformation. 3 stretches are compositionally biased toward low complexity: residues 253 to 274 (WSYQ…SMCS), 284 to 295 (SSVSSHDSGFVS), and 312 to 330 (TSQK…TCQS). Disordered stretches follow at residues 253-405 (WSYQ…EVSP), 420-485 (LEHQ…RNSN), and 527-562 (IRRT…PTVP). T257 carries the post-translational modification Phosphothreonine. S261 bears the Phosphoserine mark. The span at 331–341 (VSECSSPTSDW) shows a compositional bias: polar residues. Residues 360–369 (DRVEHLRDTE) show a composition bias toward basic and acidic residues. S404 bears the Phosphoserine mark. Over residues 429–442 (SLQYSSGYSTQTTT) the composition is skewed to low complexity. Polar residues predominate over residues 443-455 (PSCSEDTIPSQGS). 6 positions are modified to phosphoserine: S542, S564, S575, S587, S597, and S602. The residue at position 606 (T606) is a Phosphothreonine. The disordered stretch occupies residues 661–690 (FPFPTALSATPSEETPTPPPAATSDPPAED). One can recognise a WH2 domain in the interval 687 to 704 (PAEDMLVAIRRGVRLRRT).

The protein belongs to the MTSS family. As to quaternary structure, interacts (via IMD domain) with RAC1; this interaction may be important to potentiate PDGF-induced RAC1 activation.

It is found in the cytoplasm. Its subcellular location is the cell projection. The protein localises to the ruffle. Functionally, involved in plasma membrane dynamics. Potentiated PDGF-mediated formation of membrane ruffles and lamellipodia in fibroblasts, acting via RAC1 activation. May function in actin bundling. In Mus musculus (Mouse), this protein is Protein MTSS 2 (Mtss2).